Consider the following 87-residue polypeptide: Alpha-toxin To2 (87 aa).

The first 20 residues, 1 to 20 (MIRFVLFISCFFLIGTVVEC), serve as a signal peptide directing secretion. The 63-residue stretch at 22 to 84 (KDGYLMEGDG…IWDSKNNKCG (63 aa)) folds into the LCN-type CS-alpha/beta domain. 4 cysteine pairs are disulfide-bonded: Cys32/Cys83, Cys36/Cys58, Cys44/Cys64, and Cys48/Cys66. Lys85 bears the Lysine amide mark.

Expressed by the venom gland.

Its subcellular location is the secreted. Alpha toxins bind voltage-independently at site-3 of sodium channels (Nav) and inhibit the inactivation of the activated channels, thereby blocking neuronal transmission. Affects the tetrodotoxin-sensitive sodium current permeability of F-11 rat neuroblastoma cells. Produces a dose dependent increase in amplitude and duration of the current. The protein is Alpha-toxin To2 of Tityus obscurus (Amazonian scorpion).